The following is a 222-amino-acid chain: Dense granule protein 3 (222 aa).

A run of 2 helical transmembrane segments spans residues 22 to 42 (LIPFLVPFVVFLVAAALGGLA) and 162 to 182 (IPGYFVVINAILAAYYIRKVL). A Prevents secretion from ER motif is present at residues 219–222 (KKQT).

As to quaternary structure, homodimer. Interacts (via N-terminus) with human host CAMLG (via N-terminus).

The protein resides in the cytoplasm. It is found in the host endoplasmic reticulum. Its subcellular location is the parasitophorous vacuole membrane. Its function is as follows. Direct host-parasite interaction occurs at the cytoplasmic faces of the parasitophorous vacuole membrane (PVM) and the host endoplasmic reticulum (ER) membrane via GRA3 and host CAMLG association. Direct insertion of GRA3 ER retrieval motif into the host ER membrane contributes to the host ER recruitment to the PVM. This is Dense granule protein 3 from Toxoplasma gondii.